The sequence spans 555 residues: Glucosylglycerate phosphorylase (555 aa).

The Nucleophile role is filled by aspartate 231.

Belongs to the glycosyl hydrolase 13 family. Glucosylglycerate phosphorylase subfamily.

It catalyses the reaction (2R)-2-O-(alpha-D-glucopyranosyl)-glycerate + phosphate = (R)-glycerate + alpha-D-glucose 1-phosphate. Its function is as follows. Catalyzes the reversible phosphorolysis of glucosylglycerate into alpha-D-glucose 1-phosphate (Glc1P) and D-glycerate. May be a regulator of intracellular levels of glucosylglycerate, a compatible solute that primarily protects organisms facing salt stress and very specific nutritional constraints. Has a very strict substrate specificity. Cannot catalyze the phosphorolysis of sucrose or synthesize sucrose from Glc1P and D-fructose. This Allomeiothermus silvanus (strain ATCC 700542 / DSM 9946 / NBRC 106475 / NCIMB 13440 / VI-R2) (Thermus silvanus) protein is Glucosylglycerate phosphorylase.